The following is a 353-amino-acid chain: Histidinol-phosphate aminotransferase (353 aa).

An N6-(pyridoxal phosphate)lysine modification is found at Lys-218.

It belongs to the class-II pyridoxal-phosphate-dependent aminotransferase family. Histidinol-phosphate aminotransferase subfamily. As to quaternary structure, homodimer. Pyridoxal 5'-phosphate serves as cofactor.

It carries out the reaction L-histidinol phosphate + 2-oxoglutarate = 3-(imidazol-4-yl)-2-oxopropyl phosphate + L-glutamate. It functions in the pathway amino-acid biosynthesis; L-histidine biosynthesis; L-histidine from 5-phospho-alpha-D-ribose 1-diphosphate: step 7/9. The protein is Histidinol-phosphate aminotransferase of Synechococcus sp. (strain JA-3-3Ab) (Cyanobacteria bacterium Yellowstone A-Prime).